The sequence spans 985 residues: Rho guanine nucleotide exchange factor 2 (985 aa).

A disordered region spans residues 1–32 (MSRIESLTRARIDRSKEQATKTREKEKMKEAK). The Phorbol-ester/DAG-type zinc finger occupies 39 to 86 (GHLFTTISVSGMTMCYACNKSITAKEALICPTCNVTIHNRCKDTLANC). A phosphoserine mark is found at S109, S122, S129, S133, and S137. Residues 131-161 (RQSLLGSRRGLSSLSLAKSVSTTNIAGHFND) are interaction with DYNLT1. S143 is subject to Phosphoserine; by PAK4. Phosphoserine is present on residues S151, S163, S172, S174, and S177. A DH domain is found at 236 to 433 (KKQDVIYELI…KELLSNVDQD (198 aa)). An N6-acetyllysine modification is found at K354. The PH domain occupies 473–572 (KLIHDGCLLW…WIRVIQQSVR (100 aa)). Residues 591–615 (LRRIKTKLQQKNQALVELLQMNVEL) adopt a coiled-coil conformation. Phosphoserine occurs at positions 646 and 649. The residue at position 680 (T680) is a Phosphothreonine; by MAPK1 or MAPK3. S692, S710, and S781 each carry phosphoserine. A Phosphothreonine modification is found at T795. The stretch at 797-866 (EKQATELALL…RQLAALGQNE (70 aa)) forms a coiled coil. Position 885 is a phosphoserine (S885). 2 disordered regions span residues 890-909 (DALY…DRLD) and 918-985 (HRPF…ASES). Phosphotyrosine is present on Y893. S895 is modified (phosphoserine; by PAK4). A compositionally biased stretch (basic and acidic residues) spans 919–938 (RPFDDREAQELGSPEDRLQD). Phosphoserine occurs at positions 931, 939, and 940. A compositionally biased stretch (acidic residues) spans 940 to 949 (SDPDTCSEEE). A Phosphothreonine modification is found at T944. Residues S946, S951, S952, S955, and S959 each carry the phosphoserine modification.

As to quaternary structure, found in a complex composed at least of ARHGEF2, NOD2 and RIPK2. Interacts with RIPK2; the interaction mediates tyrosine phosphorylation of RIPK2 by Src kinase CSK. Interacts with RIPK1 and RIPK3. Interacts with YWHAZ/14-3-3 zeta; when phosphorylated at Ser-885. Interacts with the kinases PAK4, AURKA and MAPK1. Interacts with RHOA and RAC1. Interacts with NOD1. Interacts (via the N- terminal zinc finger) with CAPN6 (via domain II). Interacts with DYNLT1. Post-translationally, phosphorylation of Ser-885 by PAK1 induces binding to protein YWHAZ, promoting its relocation to microtubules and the inhibition of its activity. Phosphorylated by AURKA and CDK1 during mitosis, which negatively regulates its activity. Phosphorylation by MAPK1 or MAPK3 increases nucleotide exchange activity. Phosphorylation by PAK4 releases GEF-H1 from the microtubules. Phosphorylated on serine, threonine and tyrosine residues in a RIPK2-dependent manner.

The protein resides in the cytoplasm. It localises to the cytoskeleton. It is found in the cell junction. The protein localises to the tight junction. Its subcellular location is the golgi apparatus. The protein resides in the spindle. It localises to the cytoplasmic vesicle. Functionally, activates Rho-GTPases by promoting the exchange of GDP for GTP. May be involved in epithelial barrier permeability, cell motility and polarization, dendritic spine morphology, antigen presentation, leukemic cell differentiation, cell cycle regulation, innate immune response, and cancer. Binds Rac-GTPases, but does not seem to promote nucleotide exchange activity toward Rac-GTPases. May stimulate instead the cortical activity of Rac. Inactive toward CDC42, TC10, or Ras-GTPases. Forms an intracellular sensing system along with NOD1 for the detection of microbial effectors during cell invasion by pathogens. Involved in innate immune signaling transduction pathway promoting cytokine IL6/interleukin-6 and TNF-alpha secretion in macrophage upon stimulation by bacterial peptidoglycans; acts as a signaling intermediate between NOD2 receptor and RIPK2 kinase. Contributes to the tyrosine phosphorylation of RIPK2 through Src tyrosine kinase leading to NF-kappaB activation by NOD2. Overexpression activates Rho-, but not Rac-GTPases, and increases paracellular permeability. Involved in neuronal progenitor cell division and differentiation. Involved in the migration of precerebellar neurons. The polypeptide is Rho guanine nucleotide exchange factor 2 (Arhgef2) (Rattus norvegicus (Rat)).